Reading from the N-terminus, the 410-residue chain is Cytochrome P450 (410 aa).

Cysteine 359 lines the heme pocket.

This sequence belongs to the cytochrome P450 family. Heme serves as cofactor.

The chain is Cytochrome P450 (cypA) from Bacillus subtilis (strain 168).